Consider the following 1628-residue polypeptide: MSVTSWFLVSSSGTRHRLPREMIFVGREDCELMLQSRSVDKQHAVINYDSDKDEHRVKDLGSLNGTFVNDVRIPDQKYITLKLSDNIRFGYDINTYVLEQIQHQVPEEALKHEKYTSHLQMCLKTAAAGREDQFKEHGAHVDSAQAKQDKADKKATSDIPAYRTPLYGQPSWWGEDDDNKLDKEGRRQDEHYSERPNDMTQHEEEINGNMSYRDSQDQCVYPFRREPSYFEIPTKDFQQPVKPPETQVYEIPTKDTDAVPPVTPPVMQSHASFTIEFDDCQPGKIKIKDHVTKFSMRQRKTAGKEPAPTEMVSAESKVADWLVQNDPSLIRRPAPGEDVYSTKSDLPIHNRTLKGNRHEDGTQSDSEDPLVAQPEQEIGTPDHPQLQRQIKREPEELLHNQQAFVIQFFDDDDAPRKKRSQSFTHNANSPQNDTDPVLKAKAEKRKGTLHVEKVSTNGMGSTAPASKSLSSPSFPQRSNSFRREKTEDRISSAPTTAKLPGKNYGSVGKKSKLAQEFAAEYMREQVEVVKQAAEKPMTLPLSTSILQQPASQVQISSQAQTMQLTSDVRTGKVKNEEEDNLSDAGTYTIETETQDREVEQARKMIDQVFGVFESDEYSKIASTVYRPVIKLGEEEPLASEPSVPHKPIMSSTPPVKLSNGLPAETLIERTGSSSKQSQKWVSRWASLADSYPDASPTSPLDSQKQGLIADDEDVIERTEHQGEADPTVPSRTRRLLPQLPPENVMPTIFVCQESFSDESQRKSLEEPEKRISEENSSLLLVQEELDPDSLSDTSKSDDGVISVRKSAKASNTYRNGWKGEESHSREPSVQRTSVPSNEKKSTCFYVGNDDVGSVKQTSFGLSSKDVIKGPESHIKMKVNLHITAETPSSGKAVNQFPKKDNGSAKDPLSFVRQESFTKETSSSNVLPNKLPHISTHPLLKDLSVTKSNHDYSKETRLILKETETALAALEAKLFTQSHLDEIENTPCLRDDSLSGDSDVDTASTVSLVSDKNVPSHSQKNRIVSLQKEKSSSTSSIQEQYCQPSARERLSEKRRTVPADAGTRNVTKRLGMTRSTGARGSLDFTDEERCSSLPYMPVSETVSSDYEHSSSRHISRRKPFGQTCKDESSRSSNAQKVQQALTRSNSLSTPRPTRASKLRRARLGESSDNESADVERSNISPGTSSANSSSAKSSTETKKPSRLDILAMPRKRAGSFNVPSDSETTSSVRGMFSGRSIDQSYTSRKPAVAESKQPPKKPLPPTQKQTPRPRSSSVKYSSSSTSRRRQQGSDYVSTSEEECGSNHSTPKHKHSRASTATQTSRSSSVSRRQMPNSRQDEEEDEQEVYNNFMAQSVEIAEIARLSQTLVKDVASLAREIHDVAGDGDSQSSSGTGQSTSISSVPNTPASTISAREEIIKRSLQRTCSSQLVHHIPEASLNYQKIPPGSTGLEDFDQNMNDSREDPSKRRARNIEEVIFDNLMLNPVSHLSHTICANTEVLTEKMKILFQNTEKNWEEIEAKINSENEVPILKTSNKEISSILKELRRVQKQLEVINAIIDRSGHLDVPSSNKKTSSTILTSNPLSRTTNNSAARTESQTPGHVRNYMHKSSSSSSRSPGSSFSRDDEETYIV.

The FHA domain maps to 23–73 (IFVGREDCELMLQSRSVDKQHAVINYDSDKDEHRVKDLGSLNGTFVNDVRI). 12 disordered regions span residues 136–201 (EHGA…DMTQ), 329–369 (LIRR…SEDP), 415–504 (PRKK…GKNY), 566–586 (SDVRTGKVKNEEEDNLSDAGT), 637–659 (LASEPSVPHKPIMSSTPPVKLSN), 719–739 (EHQGEADPTVPSRTRRLLPQL), 758–842 (ESQR…KKST), 1005–1084 (VSLV…LDFT), 1100–1341 (TVSS…EDEQ), 1379–1405 (AGDGDSQSSSGTGQSTSISSVPNTPAS), 1443–1463 (GSTGLEDFDQNMNDSREDPSK), and 1560–1628 (HLDV…TYIV). Basic and acidic residues-rich tracts occupy residues 147 to 156 (KQDKADKKAT) and 180 to 201 (KLDKEGRRQDEHYSERPNDMTQ). A compositionally biased stretch (polar residues) spans 421–434 (QSFTHNANSPQNDT). A compositionally biased stretch (basic and acidic residues) spans 436-453 (PVLKAKAEKRKGTLHVEK). Positions 454–479 (VSTNGMGSTAPASKSLSSPSFPQRSN) are enriched in polar residues. Basic and acidic residues predominate over residues 481–490 (FRREKTEDRI). 2 stretches are compositionally biased toward basic and acidic residues: residues 758–773 (ESQRKSLEEPEKRISE) and 817–828 (WKGEESHSREPS). Polar residues predominate over residues 1005-1023 (VSLVSDKNVPSHSQKNRIV). Residues 1045 to 1056 (ARERLSEKRRTV) are compositionally biased toward basic and acidic residues. Over residues 1129 to 1150 (RSSNAQKVQQALTRSNSLSTPR) the composition is skewed to polar residues. The span at 1176–1193 (SNISPGTSSANSSSAKSS) shows a compositional bias: low complexity. The span at 1216–1227 (NVPSDSETTSSV) shows a compositional bias: polar residues. Composition is skewed to low complexity over residues 1261–1280 (TQKQTPRPRSSSVKYSSSST), 1312–1328 (ASTATQTSRSSSVSRRQ), and 1381–1398 (DGDSQSSSGTGQSTSISS). Residues 1564–1596 (PSSNKKTSSTILTSNPLSRTTNNSAARTESQTP) show a composition bias toward polar residues. Positions 1606-1618 (SSSSSSRSPGSSF) are enriched in low complexity.

Belongs to the CEP170 family.

The protein localises to the cytoplasm. It localises to the cytoskeleton. Plays a role in microtubule organization. The sequence is that of Centrosomal protein of 170 kDa protein B (cep170b) from Xenopus tropicalis (Western clawed frog).